The chain runs to 170 residues: Ankyrin repeat-containing protein C105.02c (170 aa).

ANK repeat units follow at residues 46–76 (LGND…NLNN) and 81–116 (TGDT…DPLL). The disordered stretch occupies residues 150 to 170 (SADVVADDDDEEEGSGESDEE). Acidic residues predominate over residues 154–170 (VADDDDEEEGSGESDEE).

Its subcellular location is the cytoplasm. It is found in the nucleus. This chain is Ankyrin repeat-containing protein C105.02c, found in Schizosaccharomyces pombe (strain 972 / ATCC 24843) (Fission yeast).